The sequence spans 454 residues: Glutaredoxin domain-containing cysteine-rich protein CG31559 (454 aa).

Disordered regions lie at residues 30 to 88 (ETAD…QRQK) and 217 to 239 (RSAR…GSDS). The span at 33–45 (DSGNGSDLESTGL) shows a compositional bias: polar residues. The span at 58 to 69 (SSLGSDSMHGSS) shows a compositional bias: low complexity. Residues 70–84 (TEYVRQSASQPSGQR) show a composition bias toward polar residues. Positions 217 to 227 (RSARSGDEADH) are enriched in basic and acidic residues. Residues 295–400 (NAKNFKEKDL…QLLKPYKSMA (106 aa)) enclose the Glutaredoxin domain.

It belongs to the GRXCR1 family.

This Drosophila melanogaster (Fruit fly) protein is Glutaredoxin domain-containing cysteine-rich protein CG31559.